Here is a 565-residue protein sequence, read N- to C-terminus: MMWGSRRRTRSRWGRSGPMTRGMGAVSRAVGTAWRRSLQLRVVALTLGLSLAVILALGFVLTSQVTNRVLDVKVKAAIEQIERARTTVGGIVNGEEARSLDSSLQLARNTLTSKTDSASGAGTAGTFDAVLMVPGDGPRAATTAGPVDQVPASLRGFVKAGQASYQYATVHTDGFSGPALIVGSPASSQVANLELYLIFPLKNEQATIQLVRGTMITGGAVLLVLLAGIALLVSRQVVVPVRSASRIAERFAEGHLSERMPVRGEDDMARLAMSFNDMAESLSRQITQLEEFGNLQRRFTSDVSHELRTPLTTVRMAADLIYDHSADLDPTLARSTELMVNELDRFESLLNDLLEISRHDAGVAELSVEAVDLRSTVQSALSNVGHLAEDAGIELQVELPAEEVIAEVDTRRVERILRNLIANAIDHAEHKPVKIRMAADEDTVAVTVRDYGVGLRPGEEKLVFSRFWRADPSRVRRSGGTGLGLAISIEDARLHQGRLEAWGEPGVGSCFRLTLPLVRGHKVTTSPLPMKPIPQPSPSGGQSPSTGPQHAKDRARQREHAERSL.

Basic residues predominate over residues 1 to 13; sequence MMWGSRRRTRSRW. A disordered region spans residues 1–21; the sequence is MMWGSRRRTRSRWGRSGPMTR. 2 helical membrane-spanning segments follow: residues 42–62 and 213–233; these read VVAL…FVLT and GTMI…ALLV. The 53-residue stretch at 235–287 folds into the HAMP domain; the sequence is RQVVVPVRSASRIAERFAEGHLSERMPVRGEDDMARLAMSFNDMAESLSRQIT. Residues 302–519 form the Histidine kinase domain; that stretch reads DVSHELRTPL…CFRLTLPLVR (218 aa). Histidine 305 is modified (phosphohistidine; by autocatalysis). The disordered stretch occupies residues 524–565; that stretch reads TTSPLPMKPIPQPSPSGGQSPSTGPQHAKDRARQREHAERSL. Positions 538-549 are enriched in low complexity; that stretch reads PSGGQSPSTGPQ. Residues 550-565 are compositionally biased toward basic and acidic residues; that stretch reads HAKDRARQREHAERSL.

It is found in the cell membrane. The catalysed reaction is ATP + protein L-histidine = ADP + protein N-phospho-L-histidine.. Member of the two-component regulatory system MtrA/MtrB. Seems to function as a membrane-associated protein kinase that phosphorylates MtrA in response to environmental signals. This Mycolicibacterium paratuberculosis (strain ATCC BAA-968 / K-10) (Mycobacterium paratuberculosis) protein is Sensor histidine kinase MtrB (mtrB).